The following is a 369-amino-acid chain: Flagellar P-ring protein (369 aa).

Residues 1 to 22 (MLNFKHLMAAALLLSTSLGVQA) form the signal peptide.

This sequence belongs to the FlgI family. In terms of assembly, the basal body constitutes a major portion of the flagellar organelle and consists of four rings (L,P,S, and M) mounted on a central rod.

The protein localises to the periplasm. It localises to the bacterial flagellum basal body. Functionally, assembles around the rod to form the L-ring and probably protects the motor/basal body from shearing forces during rotation. This Pseudomonas fluorescens (strain ATCC BAA-477 / NRRL B-23932 / Pf-5) protein is Flagellar P-ring protein.